A 90-amino-acid chain; its full sequence is Co-chaperonin GroES (90 aa).

The protein belongs to the GroES chaperonin family. In terms of assembly, heptamer of 7 subunits arranged in a ring. Interacts with the chaperonin GroEL.

The protein localises to the cytoplasm. Functionally, together with the chaperonin GroEL, plays an essential role in assisting protein folding. The GroEL-GroES system forms a nano-cage that allows encapsulation of the non-native substrate proteins and provides a physical environment optimized to promote and accelerate protein folding. GroES binds to the apical surface of the GroEL ring, thereby capping the opening of the GroEL channel. This Thermosipho africanus (strain TCF52B) protein is Co-chaperonin GroES.